Here is a 451-residue protein sequence, read N- to C-terminus: UPF0210 protein NMC1568 (451 aa).

It belongs to the UPF0210 family. In terms of assembly, homodimer.

This chain is UPF0210 protein NMC1568, found in Neisseria meningitidis serogroup C / serotype 2a (strain ATCC 700532 / DSM 15464 / FAM18).